The following is a 411-amino-acid chain: Signal-transducing adaptor protein 2 (411 aa).

In terms of domain architecture, PH spans 20–120 (HYYESFLEKK…GFILTVVELR (101 aa)). The residue at position 22 (tyrosine 22) is a Phosphotyrosine. The region spanning 152 to 248 (WCFLQVSRLE…RALVPFLLDE (97 aa)) is the SH2 domain. Tyrosine 250 carries the post-translational modification Phosphotyrosine; by PTK6. Positions 291 to 320 (VPVSVSSQEDKLPQLPPLPQLPDTDENYVT) are disordered. 2 positions are modified to phosphotyrosine: tyrosine 318 and tyrosine 330. Residues 338-364 (SSQAVPLKPKKPARLPAKPPKPSVVPK) are disordered. Positions 390-410 (TRLGDITAELEEKLQKRRALE) form a coiled coil.

As to quaternary structure, interacts with PTK6 and CSF1R. Post-translationally, phosphorylated on tyrosine. Phosphorylated by PTK6 at Tyr-250 modulates PTK6-mediated STAT3 activation. In terms of tissue distribution, widely expressed.

The protein resides in the cytoplasm. Its subcellular location is the membrane. Its function is as follows. Substrate of protein kinase PTK6. May play a regulatory role in the acute-phase response in systemic inflammation and may modulate STAT3 activity. This Mus musculus (Mouse) protein is Signal-transducing adaptor protein 2 (Stap2).